A 1036-amino-acid chain; its full sequence is Non-canonical non-ribosomal peptide synthetase FUB8 (1036 aa).

Residues 21-343 (EIARDEPDRV…LASVVTHPDE (323 aa)) form an adenylation (A) domain region. In terms of domain architecture, Carrier spans 544 to 621 (TTEDVVRSGI…QLAHTVWSHL (78 aa)). Residue Ser579 is modified to O-(pantetheine 4'-phosphoryl)serine. The tract at residues 658–899 (LTGTTGEIGS…IPIDLLTEVI (242 aa)) is thioester reductase (TR) domain.

It functions in the pathway mycotoxin biosynthesis. Its function is as follows. Non-canonical non-ribosomal peptide synthetase; part of the gene cluster that mediates the biosynthesis of fusaric acid, a mycotoxin with low to moderate toxicity to animals and humans, but with high phytotoxic properties. L-aspartate is suggested as fusaric acid amino acid precursor that is activated and further processed to O-acetyl-L-homoserine by cluster enzymes aspartate kinase FUB3 and homoserine O-acetyltransferase FUB5, as well as enzymes of the primary metabolism. The polyketide synthase (PKS) FUB1 generates the triketide trans-2-hexenal which is presumptively released by the hydrolase FUB4 and linked to the NRPS-bound amino acid precursor by NAD(P)-dependent dehydrogenase FUB6. FUB1, FUB4, and the non-canonical NRPS Fub8 may form an enzyme complex. Further processing of the NRPS-bound intermediate might be carried out by FUB6 and the sulfhydrylase FUB7, enabling a spontaneous electrocyclization to close the carbon backbone of fusaric acid. Dihydrofusaric acid is likely to be released via reduction by the thioester reductase (TR) domain of FUB8 whereupon the final oxidation to fusaric acid may (also) be performed by the FMN-dependent dehydrogenase FUB9. The sequence is that of Non-canonical non-ribosomal peptide synthetase FUB8 from Fusarium oxysporum f. sp. lycopersici (strain 4287 / CBS 123668 / FGSC 9935 / NRRL 34936) (Fusarium vascular wilt of tomato).